Consider the following 373-residue polypeptide: T-protein (373 aa).

The 90-residue stretch at 1–90 (MVAELTALRD…ESYSSENDKG (90 aa)) folds into the Chorismate mutase domain. A Prephenate/arogenate dehydrogenase domain is found at 99–361 (RPVVIVGGGG…DYAQRFQSES (263 aa)).

In the C-terminal section; belongs to the prephenate/arogenate dehydrogenase family.

The protein localises to the cytoplasm. It carries out the reaction chorismate = prephenate. It catalyses the reaction prephenate + NAD(+) = 3-(4-hydroxyphenyl)pyruvate + CO2 + NADH. It functions in the pathway amino-acid biosynthesis; L-tyrosine biosynthesis; (4-hydroxyphenyl)pyruvate from prephenate (NAD(+) route): step 1/1. Its pathway is metabolic intermediate biosynthesis; prephenate biosynthesis; prephenate from chorismate: step 1/1. The chain is T-protein (tyrA) from Escherichia coli (strain K12).